A 287-amino-acid chain; its full sequence is Survival motor neuron protein (287 aa).

Positions 1 to 28 (MGGGGGGFPEPEDSVLFRRGTGESDDSD) are disordered. The segment at 9–40 (PEPEDSVLFRRGTGESDDSDVWDDTALIKAYD) is P1 (binding site for GEMIN2). Threonine 21 is subject to Phosphothreonine. 2 positions are modified to phosphoserine: serine 24 and serine 27. A Glycyl lysine isopeptide (Lys-Gly) (interchain with G-Cter in SUMO2) cross-link involves residue lysine 47. Disordered regions lie at residues 51–86 (KNGD…PSKQ) and 149–221 (NAQE…PPPH). Residues 64-77 (GTPKRKSAKNKSQR) are compositionally biased toward basic residues. Threonine 65 carries the post-translational modification Phosphothreonine. Position 80 is a phosphothreonine; by PKA (threonine 80). The region spanning 86–146 (QWKVGDNCCA…LSPTSEVANI (61 aa)) is the Tudor domain. Residues 92–204 (NCCAIWSEDG…MPRSGLGPGK (113 aa)) are required for interaction with RPP20/POP7. Low complexity predominate over residues 149 to 160 (NAQENENESQIS). The span at 167–179 (SSRSPLNKPNNIR) shows a compositional bias: polar residues. Lysine 204 is covalently cross-linked (Glycyl lysine isopeptide (Lys-Gly) (interchain with G-Cter in SUMO2)). Pro residues predominate over residues 211-221 (GPPPPPPPPPH). Positions 234–261 (PPMIPPPPPICPDSLDDADALGSMLISW) are P2 (binding site for SM B). The segment at 273-287 (GFKQSQKEGRYSHFN) is required for interaction with SYNCRIP.

Belongs to the SMN family. Homooligomer; may form higher order homooligomers in the dimer to octamer range. Part of the core SMN complex that contains SMN1, GEMIN2/SIP1, DDX20/GEMIN3, GEMIN4, GEMIN5, GEMIN6, GEMIN7, GEMIN8 and STRAP/UNRIP. Part of the SMN-Sm complex that contains SMN1, GEMIN2/SIP1, DDX20/GEMIN3, GEMIN4, GEMIN5, GEMIN6, GEMIN7, GEMIN8, STRAP/UNRIP and the Sm proteins SNRPB, SNRPD1, SNRPD2, SNRPD3, SNRPE, SNRPF and SNRPG. Component of an import snRNP complex composed of KPNB1, RNUT1, SMN1 and ZNF259. Interacts with DDX20, FBL, NOLA1, RNUT1, SYNCRIP and with several spliceosomal snRNP core Sm proteins, including SNRPB, SNRPD1, SNRPD2, SNRPD3, SNRPE and ILF3. Interacts with GEMIN2; the interaction is direct. Interacts with GEMIN3; the interaction is direct. Interacts with GEMIN8; the interaction is direct. Interacts with SNRPB; the interaction is direct. Interacts (via Tudor domain) with SNRPD1 (via C-terminus); the interaction is direct. Interacts with SNRPD2; the interaction is direct. Interacts (via Tudor domain) with SNRPD3 (via C-terminus); the interaction is direct. Interacts with SNRPE; the interaction is direct. Interacts with OSTF1, LSM10, LSM11 and RPP20/POP7. Interacts (via C-terminal region) with ZPR1 (via C-terminal region). Interacts (via Tudor domain) with COIL. Interacts with SETX; recruits SETX to POLR2A. Interacts with POLR2A (via the C-terminal domain (CTD)). Interacts with PRMT5. Interacts with XRN2. Interacts (via C-terminus) with FMR1 (via C-terminus); the interaction is direct and occurs in a RNA-independent manner. Interacts (via Tudor domain) with SF3B2 ('Arg-508'-methylated form). Interacts with WRAP53/TCAB1. Interacts (via Tudor domain) with ELAVL4 in an RNA-independent manner; the interaction is required for localization of ELAVL4 to RNA granules. Interacts with FRG1.

The protein resides in the nucleus. The protein localises to the gem. It is found in the cajal body. Its subcellular location is the cytoplasm. It localises to the cytoplasmic granule. The protein resides in the perikaryon. The protein localises to the cell projection. It is found in the neuron projection. Its subcellular location is the axon. It localises to the myofibril. The protein resides in the sarcomere. The protein localises to the z line. In terms of biological role, the SMN complex catalyzes the assembly of small nuclear ribonucleoproteins (snRNPs), the building blocks of the spliceosome, and thereby plays an important role in the splicing of cellular pre-mRNAs. Most spliceosomal snRNPs contain a common set of Sm proteins SNRPB, SNRPD1, SNRPD2, SNRPD3, SNRPE, SNRPF and SNRPG that assemble in a heptameric protein ring on the Sm site of the small nuclear RNA to form the core snRNP (Sm core). In the cytosol, the Sm proteins SNRPD1, SNRPD2, SNRPE, SNRPF and SNRPG are trapped in an inactive 6S pICln-Sm complex by the chaperone CLNS1A that controls the assembly of the core snRNP. To assemble core snRNPs, the SMN complex accepts the trapped 5Sm proteins from CLNS1A forming an intermediate. Binding of snRNA inside 5Sm ultimately triggers eviction of the SMN complex, thereby allowing binding of SNRPD3 and SNRPB to complete assembly of the core snRNP. Within the SMN complex, SMN1 acts as a structural backbone and together with GEMIN2 it gathers the Sm complex subunits. Ensures the correct splicing of U12 intron-containing genes that may be important for normal motor and proprioceptive neurons development. Also required for resolving RNA-DNA hybrids created by RNA polymerase II, that form R-loop in transcription terminal regions, an important step in proper transcription termination. May also play a role in the metabolism of small nucleolar ribonucleoprotein (snoRNPs). This is Survival motor neuron protein (SMN1) from Bos taurus (Bovine).